Reading from the N-terminus, the 259-residue chain is Probable UMP-CMP kinase 2 (259 aa).

An ATP-binding site is contributed by 63–68 (GSGKGT). Residues 83 to 112 (SAGDLLRREIAMHTENGAMILNLIKDGKIV) are NMP. A ribonucleoside 5'-phosphate is bound by residues Arg-89, 110–112 (KIV), and 137–140 (GFPR). Residue Asn-144 coordinates CMP. An LID region spans residues 175 to 183 (NRNQGRIDD). Arg-176 is an ATP binding site. Residues Arg-180 and Arg-191 each contribute to the a ribonucleoside 5'-phosphate site. Gly-219 provides a ligand contact to ATP.

Belongs to the adenylate kinase family. UMP-CMP kinase subfamily. Monomer. It depends on Mg(2+) as a cofactor.

The protein localises to the cytoplasm. It is found in the nucleus. The enzyme catalyses CMP + ATP = CDP + ADP. The catalysed reaction is dCMP + ATP = dCDP + ADP. It carries out the reaction UMP + ATP = UDP + ADP. Catalyzes the phosphorylation of pyrimidine nucleoside monophosphates at the expense of ATP. Plays an important role in de novo pyrimidine nucleotide biosynthesis. Has preference for UMP and CMP as phosphate acceptors. This is Probable UMP-CMP kinase 2 (UMK2) from Arabidopsis thaliana (Mouse-ear cress).